The chain runs to 279 residues: MAIRKYKPTTPGRRGSSVADFAEITRSTPEKSLLRPLPKHGGRNNAGRITTRHIGGGHKRQYRVIDFKRNDKDGVLATVAHIEYDPNRTARIALLHFIDGSKRYIIAPNKLKQGDKIESGPQADIKPGNNLPLRNIPTGTVIHAIELRPGGGAKMGRSAGASVRLVAKDGPYAQLRLPSGEIRNVDARCRATIGEVGNAEQSNINWGKAGRMRWKGVRPTVRGVAMNPVDHPHGGGEGKTSGGRHPVSPWGQKEGRTRHINKPSDKLIVRRRNAGKKRK.

2 disordered regions span residues 32-53 (SLLRPLPKHGGRNNAGRITTRH) and 225-279 (AMNP…KKRK). Over residues 253–268 (KEGRTRHINKPSDKLI) the composition is skewed to basic and acidic residues. Residues 269–279 (VRRRNAGKKRK) are compositionally biased toward basic residues.

The protein belongs to the universal ribosomal protein uL2 family. In terms of assembly, part of the 50S ribosomal subunit. Forms a bridge to the 30S subunit in the 70S ribosome.

Its function is as follows. One of the primary rRNA binding proteins. Required for association of the 30S and 50S subunits to form the 70S ribosome, for tRNA binding and peptide bond formation. It has been suggested to have peptidyltransferase activity; this is somewhat controversial. Makes several contacts with the 16S rRNA in the 70S ribosome. The polypeptide is Large ribosomal subunit protein uL2 (Clavibacter michiganensis subsp. michiganensis (strain NCPPB 382)).